Reading from the N-terminus, the 277-residue chain is S-formylglutathione hydrolase FrmB (277 aa).

Catalysis depends on charge relay system residues Ser145, Asp221, and His254.

It belongs to the esterase D family.

The catalysed reaction is S-formylglutathione + H2O = formate + glutathione + H(+). Serine hydrolase involved in the detoxification of formaldehyde. Hydrolyzes S-formylglutathione to glutathione and formate. The chain is S-formylglutathione hydrolase FrmB (frmB) from Escherichia coli (strain ATCC 8739 / DSM 1576 / NBRC 3972 / NCIMB 8545 / WDCM 00012 / Crooks).